An 805-amino-acid polypeptide reads, in one-letter code: MKFTLSWLKDHLETEAPLDEIVTALTDLGHEVEGVEDPVKVLGAFRICRVIEAQPHPNADRLRLCRVATWPNGPDAPSEEVQVVCGAPNARTGLVGVFAPVGTHVPGTGVDLKPGVIRGVESNGMLCSERELMLSDDHDGIIDLPEDAPMGMRFIDYKGVNDPTIEVKITPNRPDGLGVRGLARDLAARGLGRLKPLPVEPVPGLFPSPVSVTIEAALKEKGCPLFAGRTIRGVKNGPSPDWLQARLRSVGLRPISALVDITNYFTIGLNRPLHVFDVAKITGGLRIHAAEGGEELLALDGKTYKLRPGQMLISDDAQPESLAGIMGGELSGCTEETTDVFLESAYWDPITIAATGRALKIVSDARYRFERGVDPAFTLPGLELATRMILDLCGGEASEVVMDGAVPDTSRAYRFDPKRVVSLVGMEIPEAEQRTTLEALGFTLEGELAAPPSWRPDVQGEADLVEEIARVASLTKLQGKPLPRAQAGVPKPILTPLQVREQAARRTLAALGYNECVTYSFIDEAAAKLFGGGSEAVRVENPISSEMTHLRPDLLPGLLRAAARNQARGFADMALCEIGPVFAGGEPGEQQLQATGLLVGASAPRDPFGSRRPVDVYDAKADAEAVLAAVGAPAKMQISRKVPGWWHPGRSGAVGLGPNLLATFGEVHPKILREMDVKGPAVAFTILVANVPLPKVKTPTRPALKLSDLQAVERDFAFVVDASVEALTLVNAAQGADKALIESVRVFDQFSGDKAEAQMGAGKKSLALTVRLQPTDRTLTDKDIEAVSAKIVEKVAKATGATLRG.

Residues 39-155 (VKVLGAFRIC…EDAPMGMRFI (117 aa)) enclose the tRNA-binding domain. Positions 408-479 (DTSRAYRFDP…RVASLTKLQG (72 aa)) constitute a B5 domain. Residues Asp457, Asp463, Glu466, and Glu467 each contribute to the Mg(2+) site. Positions 707 to 804 (SDLQAVERDF…VAKATGATLR (98 aa)) constitute an FDX-ACB domain.

This sequence belongs to the phenylalanyl-tRNA synthetase beta subunit family. Type 1 subfamily. As to quaternary structure, tetramer of two alpha and two beta subunits. It depends on Mg(2+) as a cofactor.

Its subcellular location is the cytoplasm. It catalyses the reaction tRNA(Phe) + L-phenylalanine + ATP = L-phenylalanyl-tRNA(Phe) + AMP + diphosphate + H(+). In Cereibacter sphaeroides (strain ATCC 17023 / DSM 158 / JCM 6121 / CCUG 31486 / LMG 2827 / NBRC 12203 / NCIMB 8253 / ATH 2.4.1.) (Rhodobacter sphaeroides), this protein is Phenylalanine--tRNA ligase beta subunit.